Here is a 391-residue protein sequence, read N- to C-terminus: 3-ketoacyl-CoA thiolase (391 aa).

The Acyl-thioester intermediate role is filled by C95. Catalysis depends on proton acceptor residues H347 and C377.

The protein belongs to the thiolase-like superfamily. Thiolase family. In terms of assembly, heterotetramer of two alpha chains (FadB) and two beta chains (FadA).

The protein localises to the cytoplasm. The enzyme catalyses an acyl-CoA + acetyl-CoA = a 3-oxoacyl-CoA + CoA. Its pathway is lipid metabolism; fatty acid beta-oxidation. In terms of biological role, catalyzes the final step of fatty acid oxidation in which acetyl-CoA is released and the CoA ester of a fatty acid two carbons shorter is formed. The polypeptide is 3-ketoacyl-CoA thiolase (Hahella chejuensis (strain KCTC 2396)).